A 962-amino-acid polypeptide reads, in one-letter code: Glycine dehydrogenase (decarboxylating) (962 aa).

An N6-(pyridoxal phosphate)lysine modification is found at lysine 709.

This sequence belongs to the GcvP family. As to quaternary structure, the glycine cleavage system is composed of four proteins: P, T, L and H. Requires pyridoxal 5'-phosphate as cofactor.

It carries out the reaction N(6)-[(R)-lipoyl]-L-lysyl-[glycine-cleavage complex H protein] + glycine + H(+) = N(6)-[(R)-S(8)-aminomethyldihydrolipoyl]-L-lysyl-[glycine-cleavage complex H protein] + CO2. Its function is as follows. The glycine cleavage system catalyzes the degradation of glycine. The P protein binds the alpha-amino group of glycine through its pyridoxal phosphate cofactor; CO(2) is released and the remaining methylamine moiety is then transferred to the lipoamide cofactor of the H protein. The chain is Glycine dehydrogenase (decarboxylating) from Shewanella pealeana (strain ATCC 700345 / ANG-SQ1).